Here is a 205-residue protein sequence, read N- to C-terminus: MASISTWFRYMAHKLEYSLTLSLKSHRSNKLSDRELIQIICKNLFYGKITYLHSDKGPEMSPTMTANENTLLIRKIPIANTRFVFIGDAVVLKDPNDSDKYLVRRLAAVEGFEMVSGDEKEEPFVLEKNQCWVTAENQELKAKEAYDSRTFGPVSTADIVGRAIYCLRTAVDHGPVRNSQTAMGQDSPILAVELDVDEMAKNHKA.

Residues E59 and R104 contribute to the active site.

This sequence belongs to the peptidase S26 family. IMP1 subfamily. As to quaternary structure, heterodimer of 2 subunits, IMP1A/B and IMP12.

The protein resides in the mitochondrion inner membrane. Functionally, catalyzes the removal of transit peptides required for the targeting of proteins from the mitochondrial matrix, across the inner membrane, into the inter-membrane space. This is Mitochondrial ATP-independent inner membrane protease subunit 2 from Arabidopsis thaliana (Mouse-ear cress).